The chain runs to 217 residues: Proteasome subunit beta type-9 (217 aa).

The propeptide at 1-18 is removed in mature form; sequence MLEESSEPGWLSEEVKTG. Thr-19 serves as the catalytic Nucleophile.

Belongs to the peptidase T1B family. In terms of assembly, the 26S proteasome consists of a 20S proteasome core and two 19S regulatory subunits. The 20S proteasome core is composed of 28 subunits that are arranged in four stacked rings, resulting in a barrel-shaped structure. The two end rings are each formed by seven alpha subunits, and the two central rings are each formed by seven beta subunits. The catalytic chamber with the active sites is on the inside of the barrel. Component of the immunoproteasome, where it displaces the equivalent housekeeping subunit PSMB6. Autocleaved. The resulting N-terminal Thr residue of the mature subunit is responsible for the nucleophile proteolytic activity.

It localises to the cytoplasm. Its subcellular location is the nucleus. The enzyme catalyses Cleavage of peptide bonds with very broad specificity.. Its function is as follows. The proteasome is a multicatalytic proteinase complex which is characterized by its ability to cleave peptides with Arg, Phe, Tyr, Leu, and Glu adjacent to the leaving group at neutral or slightly basic pH. The proteasome has an ATP-dependent proteolytic activity. This subunit is involved in antigen processing to generate class I binding peptides. This chain is Proteasome subunit beta type-9 (psmb9-a), found in Salmo salar (Atlantic salmon).